The sequence spans 101 residues: Small ribosomal subunit protein uS14 (101 aa).

The protein belongs to the universal ribosomal protein uS14 family. As to quaternary structure, part of the 30S ribosomal subunit. Contacts proteins S3 and S10.

Its function is as follows. Binds 16S rRNA, required for the assembly of 30S particles and may also be responsible for determining the conformation of the 16S rRNA at the A site. This is Small ribosomal subunit protein uS14 from Janthinobacterium sp. (strain Marseille) (Minibacterium massiliensis).